The following is a 264-amino-acid chain: MKKLKLHGFNNLTKSLSFCIYDICYAKTTEERDGYIAYIDELYNANRLTEILSETCSIIGANILNIARQDYEPQGASVTILVSEEPVDPKLIDKTEHPGPLPETVVAHLDKSHICVHTYPESHPEGGLCTFRADIEVSTCGVISPLKALNYLIHQLESDIVTIDYRVRGFTRDINGMKHFIDHEINSIQNFMSDDMKALYDMVDVNVYQENIFHTKMLLKEFDLKHYMFHTKPEDLTDSERQEITAALWKEMREIYYGRNMPAV.

The active-site Schiff-base intermediate with substrate; via pyruvic acid is Ser-112. Pyruvic acid (Ser); by autocatalysis is present on Ser-112. The Proton acceptor; for processing activity role is filled by His-117. Residue Cys-140 is the Proton donor; for catalytic activity of the active site.

The protein belongs to the prokaryotic AdoMetDC family. Type 2 subfamily. In terms of assembly, heterooctamer of four alpha and four beta chains arranged as a tetramer of alpha/beta heterodimers. It depends on pyruvate as a cofactor. Post-translationally, is synthesized initially as an inactive proenzyme. Formation of the active enzyme involves a self-maturation process in which the active site pyruvoyl group is generated from an internal serine residue via an autocatalytic post-translational modification. Two non-identical subunits are generated from the proenzyme in this reaction, and the pyruvate is formed at the N-terminus of the alpha chain, which is derived from the carboxyl end of the proenzyme. The post-translation cleavage follows an unusual pathway, termed non-hydrolytic serinolysis, in which the side chain hydroxyl group of the serine supplies its oxygen atom to form the C-terminus of the beta chain, while the remainder of the serine residue undergoes an oxidative deamination to produce ammonia and the pyruvoyl group blocking the N-terminus of the alpha chain.

It catalyses the reaction S-adenosyl-L-methionine + H(+) = S-adenosyl 3-(methylsulfanyl)propylamine + CO2. It functions in the pathway amine and polyamine biosynthesis; S-adenosylmethioninamine biosynthesis; S-adenosylmethioninamine from S-adenosyl-L-methionine: step 1/1. In terms of biological role, catalyzes the decarboxylation of S-adenosylmethionine to S-adenosylmethioninamine (dcAdoMet), the propylamine donor required for the synthesis of the polyamines spermine and spermidine from the diamine putrescine. This is S-adenosylmethionine decarboxylase proenzyme from Escherichia coli O127:H6 (strain E2348/69 / EPEC).